Reading from the N-terminus, the 266-residue chain is N-acetyltransferase ECO1 (266 aa).

A CCHH-type zinc finger spans residues 31–55 (KKCTECQMSYIIDSPADCAEHKKYH). The 159-residue stretch at 108–266 (TPGKTAEVKA…SGELLIPCYI (159 aa)) folds into the N-acetyltransferase domain.

The protein belongs to the acetyltransferase family. ECO subfamily.

It is found in the nucleus. Its function is as follows. Probable acetyltransferase required for the establishment of sister chromatid cohesion and couple the processes of cohesion and DNA replication to ensure that only sister chromatids become paired together. In contrast to the structural cohesins, the deposition and establishment factors are required only during S phase. Acts by acetylating the cohesin complex component SMC3. In Eremothecium gossypii (strain ATCC 10895 / CBS 109.51 / FGSC 9923 / NRRL Y-1056) (Yeast), this protein is N-acetyltransferase ECO1 (ECO1).